The following is a 341-amino-acid chain: HTH-type transcriptional repressor PurR (341 aa).

An HTH lacI-type domain is found at 2–56; the sequence is ATIKDVAKRANVSTTTVSHVINKTRFVAEETRNAVWAAIKELHYSPSAVARSLKV. A DNA-binding region (H-T-H motif) is located at residues 4–23; the sequence is IKDVAKRANVSTTTVSHVIN. Residues 48-56 mediate DNA binding; that stretch reads SAVARSLKV. Tyr-73, Arg-190, Thr-192, Phe-221, and Asp-275 together coordinate hypoxanthine.

Homodimer.

It functions in the pathway purine metabolism; purine nucleotide biosynthesis [regulation]. Its function is as follows. Is the main repressor of the genes involved in the de novo synthesis of purine nucleotides, regulating purB, purC, purEK, purF, purHD, purL, purMN and guaBA expression. PurR is allosterically activated to bind its cognate DNA by binding the purine corepressors, hypoxanthine or guanine, thereby effecting transcription repression. This Shigella dysenteriae serotype 1 (strain Sd197) protein is HTH-type transcriptional repressor PurR.